We begin with the raw amino-acid sequence, 108 residues long: UPF0102 protein Sputcn32_3693 (108 aa).

Belongs to the UPF0102 family.

The protein is UPF0102 protein Sputcn32_3693 of Shewanella putrefaciens (strain CN-32 / ATCC BAA-453).